The following is a 433-amino-acid chain: ATP-dependent RNA helicase SUB2 (433 aa).

Residues 1–17 show a composition bias toward acidic residues; it reads MSAENQEELLDYSDSEE. The interval 1 to 39 is disordered; the sequence is MSAENQEELLDYSDSEEIAVPTTTQAGEGESANDKEADK. The Q motif motif lies at 49–77; the sequence is TGFRDFLLKPELLRAIGDCGFEHPSEVQQ. The region spanning 80 to 255 is the Helicase ATP-binding domain; it reads IPQSILGTDV…KKFMQNPLEI (176 aa). 93-100 provides a ligand contact to ATP; the sequence is AKSGLGKT. A DEAD box motif is present at residues 202-205; the sequence is DECD. Positions 267 to 428 constitute a Helicase C-terminal domain; the sequence is GLQQYYIKLE…EFPEEGVDPS (162 aa).

The protein belongs to the DEAD box helicase family. DECD subfamily.

It is found in the nucleus. The catalysed reaction is ATP + H2O = ADP + phosphate + H(+). ATP-binding RNA helicase involved in transcription elongation and required for the export of mRNA out of the nucleus. SUB2 also plays a role in pre-mRNA splicing and spliceosome assembly. May be involved in rDNA and telomeric silencing, and maintenance of genome integrity. The protein is ATP-dependent RNA helicase SUB2 (SUB2) of Lodderomyces elongisporus (strain ATCC 11503 / CBS 2605 / JCM 1781 / NBRC 1676 / NRRL YB-4239) (Yeast).